The following is a 431-amino-acid chain: Bone morphogenetic protein 7 (431 aa).

The N-terminal stretch at Met1–Ala29 is a signal peptide. Positions Asp30 to Arg292 are excised as a propeptide. N-linked (GlcNAc...) asparagine glycosylation is found at Asn187, Asn302, Asn321, and Asn372. Residues Ile291–Glu311 are disordered. Cystine bridges form between Cys330–Cys396, Cys359–Cys428, and Cys363–Cys430.

Belongs to the TGF-beta family. Homodimer; disulfide-linked. Interacts with SOSTDC1. Interacts with TWSG1. Interacts with FBN1 (via N-terminal domain) and FBN2. Interacts with type I receptor ACVR1. Interacts with type II receptor ACVR2A. Interacts with NOG; this interaction inhibits canonical BMP signaling. Interacts with SCUBE3. Interacts with ERFE; the interaction inhibits BMP-induced transcription of HAMP. Interacts with TGFBR3. In terms of processing, several N-termini starting at positions 293, 300, 315 and 316 have been identified by direct sequencing resulting in secretion of different mature forms. Expressed in the kidney and bladder. Lower levels seen in the brain.

It localises to the secreted. Its function is as follows. Growth factor of the TGF-beta superfamily that plays important role in various biological processes, including embryogenesis, hematopoiesis, neurogenesis and skeletal morphogenesis. Initiates the canonical BMP signaling cascade by associating with type I receptor ACVR1 and type II receptor ACVR2A. Once all three components are bound together in a complex at the cell surface, ACVR2A phosphorylates and activates ACVR1. In turn, ACVR1 propagates signal by phosphorylating SMAD1/5/8 that travel to the nucleus and act as activators and repressors of transcription of target genes. For specific functions such as growth cone collapse in developing spinal neurons and chemotaxis of monocytes, also uses BMPR2 as type II receptor. Can also signal through non-canonical pathways such as P38 MAP kinase signaling cascade that promotes brown adipocyte differentiation through activation of target genes, including members of the SOX family of transcription factors. Promotes the expression of HAMP, this is repressed by its interaction with ERFE. The sequence is that of Bone morphogenetic protein 7 (BMP7) from Homo sapiens (Human).